We begin with the raw amino-acid sequence, 295 residues long: Cytidine deaminase (295 aa).

2 CMP/dCMP-type deaminase domains span residues 48–168 (EDSD…FGPA) and 187–295 (DDDE…YLSL). Residue 89–91 (NME) participates in substrate binding. Histidine 102 is a Zn(2+) binding site. Residue glutamate 104 is the Proton donor of the active site. Residues cysteine 129 and cysteine 132 each contribute to the Zn(2+) site.

It belongs to the cytidine and deoxycytidylate deaminase family. Homodimer. Requires Zn(2+) as cofactor.

It catalyses the reaction cytidine + H2O + H(+) = uridine + NH4(+). The catalysed reaction is 2'-deoxycytidine + H2O + H(+) = 2'-deoxyuridine + NH4(+). Its function is as follows. This enzyme scavenges exogenous and endogenous cytidine and 2'-deoxycytidine for UMP synthesis. The chain is Cytidine deaminase from Vibrio cholerae serotype O1 (strain ATCC 39541 / Classical Ogawa 395 / O395).